We begin with the raw amino-acid sequence, 108 residues long: UPF0060 membrane protein YnfA (108 aa).

At 1–5 (MLKTT) the chain is on the periplasmic side. A helical membrane pass occupies residues 6–26 (LLFFVTALCEIIGCFLPWLWL). The Cytoplasmic segment spans residues 27–30 (KRGA). Residues 31–51 (SVWWLLPAAASLALFVWLLTL) form a helical membrane-spanning segment. The Periplasmic portion of the chain corresponds to 52 to 60 (HPAASGRVY). A helical transmembrane segment spans residues 61 to 81 (AAYGGVYVCTALLWLRVVDGV). The Cytoplasmic portion of the chain corresponds to 82–84 (RLT). Residues 85–105 (VYDWCGALIALCGMLIIVVGW) form a helical membrane-spanning segment. Over 106–108 (GRT) the chain is Periplasmic.

The protein belongs to the UPF0060 family.

The protein resides in the cell inner membrane. This is UPF0060 membrane protein YnfA from Salmonella agona (strain SL483).